Reading from the N-terminus, the 391-residue chain is DNA-directed RNA polymerase subunit Rpo1C (391 aa).

It belongs to the RNA polymerase beta' chain family. As to quaternary structure, part of the RNA polymerase complex.

Its subcellular location is the cytoplasm. The enzyme catalyses RNA(n) + a ribonucleoside 5'-triphosphate = RNA(n+1) + diphosphate. In terms of biological role, DNA-dependent RNA polymerase (RNAP) catalyzes the transcription of DNA into RNA using the four ribonucleoside triphosphates as substrates. Forms part of the jaw domain. The polypeptide is DNA-directed RNA polymerase subunit Rpo1C (Thermococcus gammatolerans (strain DSM 15229 / JCM 11827 / EJ3)).